A 359-amino-acid chain; its full sequence is Probable F-box protein At3g61730 (359 aa).

2 stretches are compositionally biased toward basic and acidic residues: residues 1–14 and 37–48; these read MKTR…DSRG and QKNDIQREEDGR. The segment at 1–60 is disordered; the sequence is MKTRSSDAEGDSRGKMIAPVGEGNGGRKRKLVQSNEQKNDIQREEDGRAKRRIVQSSDQK. Residues 82-128 enclose the F-box; degenerate domain; that stretch reads QSRFSWYEQDIWTYISRFLDGKSLVKLGATNKWFYKIAMEDTVWRFA.

As to quaternary structure, interacts with SKP1A. As to expression, expressed in flower buds, developing anthers, pollen grains, siliques, rosette leaves and roots. Detected at lower levels in open flowers, stems and cauline leaves. Expressed in young seedling in the hydathodes, shoot apical meristem, root tips and lateral root primordia.

It is found in the nucleus. In terms of biological role, regulates tapetum degeneration and pollen maturation during anther development. In Arabidopsis thaliana (Mouse-ear cress), this protein is Probable F-box protein At3g61730 (RMF).